The chain runs to 151 residues: Tetratricopeptide repeat protein 32 (151 aa).

3 TPR repeats span residues 8-41 (SHATLTLAQAHFNNGEYAEAEALYSAYIRRCACA), 58-91 (ATAYNNRGQIKYFRVDFYEAMDDYTSAIEVQPNF), and 92-125 (EVPYYNRGLILYRLGYFDDALEDFKKVLDLNPGF).

The sequence is that of Tetratricopeptide repeat protein 32 (TTC32) from Homo sapiens (Human).